A 379-amino-acid chain; its full sequence is Actin, cytoplasmic (379 aa).

This sequence belongs to the actin family.

Its subcellular location is the cytoplasm. It localises to the cytoskeleton. The enzyme catalyses ATP + H2O = ADP + phosphate + H(+). Actins are highly conserved proteins that are involved in various types of cell motility and are ubiquitously expressed in all eukaryotic cells. In Euplotes crassus, this protein is Actin, cytoplasmic.